A 243-amino-acid polypeptide reads, in one-letter code: 7-carboxy-7-deazaguanine synthase (243 aa).

Substrate is bound by residues 9 to 11 (IMG) and R24. Residues 15 to 243 (YIGRRFIFVR…IQMHKYLGML (229 aa)) enclose the Radical SAM core domain. Residues C28, C32, and C35 each contribute to the [4Fe-4S] cluster site. T84 contacts substrate. G86 contacts S-adenosyl-L-methionine.

This sequence belongs to the radical SAM superfamily. 7-carboxy-7-deazaguanine synthase family. As to quaternary structure, homodimer. The cofactor is [4Fe-4S] cluster. Requires S-adenosyl-L-methionine as cofactor. Mg(2+) serves as cofactor.

The enzyme catalyses 6-carboxy-5,6,7,8-tetrahydropterin + H(+) = 7-carboxy-7-deazaguanine + NH4(+). Its pathway is purine metabolism; 7-cyano-7-deazaguanine biosynthesis. Functionally, catalyzes the complex heterocyclic radical-mediated conversion of 6-carboxy-5,6,7,8-tetrahydropterin (CPH4) to 7-carboxy-7-deazaguanine (CDG), a step common to the biosynthetic pathways of all 7-deazapurine-containing compounds. This Methanocaldococcus jannaschii (strain ATCC 43067 / DSM 2661 / JAL-1 / JCM 10045 / NBRC 100440) (Methanococcus jannaschii) protein is 7-carboxy-7-deazaguanine synthase.